The following is a 367-amino-acid chain: 2-aminoethylphosphonate--pyruvate transaminase (367 aa).

An N6-(pyridoxal phosphate)lysine modification is found at Lys194.

This sequence belongs to the class-V pyridoxal-phosphate-dependent aminotransferase family. PhnW subfamily. As to quaternary structure, homodimer. Pyridoxal 5'-phosphate serves as cofactor.

It catalyses the reaction (2-aminoethyl)phosphonate + pyruvate = phosphonoacetaldehyde + L-alanine. Involved in phosphonate degradation. In Salmonella dublin (strain CT_02021853), this protein is 2-aminoethylphosphonate--pyruvate transaminase.